The sequence spans 473 residues: Cysteine--tRNA ligase (473 aa).

Cys-28 contributes to the Zn(2+) binding site. The 'HIGH' region signature appears at 30–40 (MTVYDFCHIGH). Zn(2+) is bound by residues Cys-212, His-237, and Glu-241. Positions 277-281 (KMSKS) match the 'KMSKS' region motif. An ATP-binding site is contributed by Lys-280.

This sequence belongs to the class-I aminoacyl-tRNA synthetase family. Monomer. Zn(2+) serves as cofactor.

The protein localises to the cytoplasm. It carries out the reaction tRNA(Cys) + L-cysteine + ATP = L-cysteinyl-tRNA(Cys) + AMP + diphosphate. The polypeptide is Cysteine--tRNA ligase (Polynucleobacter asymbioticus (strain DSM 18221 / CIP 109841 / QLW-P1DMWA-1) (Polynucleobacter necessarius subsp. asymbioticus)).